The chain runs to 252 residues: Ubiquitin carboxyl-terminal hydrolase isozyme L1 (252 aa).

Residue M1 is modified to N-acetylmethionine. A UCH catalytic domain is found at 2–250 (QLKPMEINPE…VRFSAVALCK (249 aa)). The segment at 5-10 (PMEINP) is interaction with ubiquitin. Residue C119 is the Nucleophile of the active site. S154 carries the phosphoserine modification. H190 functions as the Proton donor in the catalytic mechanism. An interaction with ubiquitin region spans residues 240-245 (EVRFSA). The S-farnesyl cysteine moiety is linked to residue C249. Residues 250–252 (KAA) constitute a propeptide, removed in mature form.

This sequence belongs to the peptidase C12 family. In terms of assembly, monomer. Homodimer. Interacts with COPS5 and SNCA. O-glycosylated. In terms of tissue distribution, neurons and cells of the diffuse neuroendocrine system and their tumors.

The protein localises to the cytoplasm. The protein resides in the endoplasmic reticulum membrane. The enzyme catalyses Thiol-dependent hydrolysis of ester, thioester, amide, peptide and isopeptide bonds formed by the C-terminal Gly of ubiquitin (a 76-residue protein attached to proteins as an intracellular targeting signal).. Functionally, ubiquitin-protein hydrolase involved both in the processing of ubiquitin precursors and of ubiquitinated proteins. This enzyme is a thiol protease that recognizes and hydrolyzes a peptide bond at the C-terminal glycine of ubiquitin. Also binds to free monoubiquitin and may prevent its degradation in lysosomes. The homodimer may have ATP-independent ubiquitin ligase activity. This chain is Ubiquitin carboxyl-terminal hydrolase isozyme L1 (UCHL1), found in Bos taurus (Bovine).